The primary structure comprises 508 residues: Aspartyl/glutamyl-tRNA(Asn/Gln) amidotransferase subunit B (508 aa).

This sequence belongs to the GatB/GatE family. GatB subfamily. In terms of assembly, heterotrimer of A, B and C subunits.

It carries out the reaction L-glutamyl-tRNA(Gln) + L-glutamine + ATP + H2O = L-glutaminyl-tRNA(Gln) + L-glutamate + ADP + phosphate + H(+). The enzyme catalyses L-aspartyl-tRNA(Asn) + L-glutamine + ATP + H2O = L-asparaginyl-tRNA(Asn) + L-glutamate + ADP + phosphate + 2 H(+). Allows the formation of correctly charged Asn-tRNA(Asn) or Gln-tRNA(Gln) through the transamidation of misacylated Asp-tRNA(Asn) or Glu-tRNA(Gln) in organisms which lack either or both of asparaginyl-tRNA or glutaminyl-tRNA synthetases. The reaction takes place in the presence of glutamine and ATP through an activated phospho-Asp-tRNA(Asn) or phospho-Glu-tRNA(Gln). This Salinibacter ruber (strain DSM 13855 / M31) protein is Aspartyl/glutamyl-tRNA(Asn/Gln) amidotransferase subunit B.